The following is a 556-amino-acid chain: MQREYDYIIIGAGSAGNVLAARLTEDPGVTVLLLEAGGPDYRVDFRTQMPAALAFPLQGRRYNWAYETEPEPYMDNRRMECGRGKGLGGSSLINGMCYIRGNALDFDHWAKRPGLEDWSYRDVLPYFRKAETRDIGANDYHGGDGPVSVATPKNDNNVLFHAMVEAGVQAGYPRTGDLNGYQQEGFGPMDRTVTPRGRRASTARGYLDMAKPRDGLHIVTHATTDRILFAGKRAIGVHYLVGNSSEGIDAHARREVLVCAGAIASPQLLQRSGVGAPDLLRALDVQLVHDLPGVGQNLQDHLEVYIQYACTKPVSLYPALQWWNQPAIGAQWLFAGTGTGASNQFEAGGFIRTREEFDWPNIQYHFLPVAINYNGSNAVKEHGFQAHVGSMRTPSRGRVHAKSRDPRQHPSILFNYQSTDQDWQEFRDAIRITREIIAQPALDAYRGREISPSADCKTDAELDAFVRSRAETAYHPSCSCAMGTDAMAVVDGQGRVHGMEGLRVIDASIMPRIITGNLNATTIMIAEKIADRVRGRTPLPRSTADYYIAGDAPVRG.

6–35 (DYIIIGAGSAGNVLAARLTEDPGVTVLLLE) serves as a coordination point for FAD. Histidine 475 functions as the Proton acceptor in the catalytic mechanism.

The protein belongs to the GMC oxidoreductase family. The cofactor is FAD.

It catalyses the reaction choline + A = betaine aldehyde + AH2. The enzyme catalyses betaine aldehyde + NAD(+) + H2O = glycine betaine + NADH + 2 H(+). The protein operates within amine and polyamine biosynthesis; betaine biosynthesis via choline pathway; betaine aldehyde from choline (cytochrome c reductase route): step 1/1. Its function is as follows. Involved in the biosynthesis of the osmoprotectant glycine betaine. Catalyzes the oxidation of choline to betaine aldehyde and betaine aldehyde to glycine betaine at the same rate. This chain is Oxygen-dependent choline dehydrogenase, found in Xanthomonas axonopodis pv. citri (strain 306).